A 501-amino-acid polypeptide reads, in one-letter code: Chromosomal replication initiator protein DnaA (501 aa).

The segment at 1–90 (MSVELWQQCV…KRSSAPRAAP (90 aa)) is domain I, interacts with DnaA modulators. A domain II region spans residues 91-164 (NAPLAAAASQ…QVEGALKHTS (74 aa)). Low complexity predominate over residues 103-121 (AAPVASTPAPAPSKSSAKK). Positions 103–150 (AAPVASTPAPAPSKSSAKKNAAENEEPSRDSFDPMAGASSQQAPIRAE) are disordered. Positions 122 to 134 (NAAENEEPSRDSF) are enriched in basic and acidic residues. Residues 165 to 381 (YLNRTFTFEN…GALKRVIAHS (217 aa)) are domain III, AAA+ region. Residues glycine 209, glycine 211, lysine 212, and threonine 213 each contribute to the ATP site. Residues 382–501 (HFMGRDITIE…YKNLLRTLTT (120 aa)) are domain IV, binds dsDNA.

It belongs to the DnaA family. As to quaternary structure, oligomerizes as a right-handed, spiral filament on DNA at oriC.

It is found in the cytoplasm. Its function is as follows. Plays an essential role in the initiation and regulation of chromosomal replication. ATP-DnaA binds to the origin of replication (oriC) to initiate formation of the DNA replication initiation complex once per cell cycle. Binds the DnaA box (a 9 base pair repeat at the origin) and separates the double-stranded (ds)DNA. Forms a right-handed helical filament on oriC DNA; dsDNA binds to the exterior of the filament while single-stranded (ss)DNA is stabiized in the filament's interior. The ATP-DnaA-oriC complex binds and stabilizes one strand of the AT-rich DNA unwinding element (DUE), permitting loading of DNA polymerase. After initiation quickly degrades to an ADP-DnaA complex that is not apt for DNA replication. Binds acidic phospholipids. The polypeptide is Chromosomal replication initiator protein DnaA (Pseudomonas fluorescens (strain SBW25)).